The primary structure comprises 472 residues: Argininosuccinate lyase (472 aa).

This sequence belongs to the lyase 1 family. Argininosuccinate lyase subfamily.

The protein resides in the cytoplasm. The catalysed reaction is 2-(N(omega)-L-arginino)succinate = fumarate + L-arginine. It functions in the pathway amino-acid biosynthesis; L-arginine biosynthesis; L-arginine from L-ornithine and carbamoyl phosphate: step 3/3. The polypeptide is Argininosuccinate lyase (Polynucleobacter necessarius subsp. necessarius (strain STIR1)).